Reading from the N-terminus, the 75-residue chain is MLILSRKENESIIIGEGIEIKVVQTGKGYAKIGIEAPKSLMILRKELVQQVKDENLHSVVQNDIKLDDLSKKLIK.

This sequence belongs to the CsrA/RsmA family. Homodimer; the beta-strands of each monomer intercalate to form a hydrophobic core, while the alpha-helices form wings that extend away from the core. Interacts with FliW.

It localises to the cytoplasm. Its function is as follows. A translational regulator that binds mRNA to regulate translation initiation and/or mRNA stability. Usually binds in the 5'-UTR at or near the Shine-Dalgarno sequence preventing ribosome-binding, thus repressing translation. Its function is probably anatagonized by FliW. Inhibits translation of flaA mRNA in vitro. Involved in post-transcriptional regulation of flagellin biosynthesis. The sequence is that of Translational regulator CsrA from Campylobacter jejuni subsp. jejuni serotype O:6 (strain 81116 / NCTC 11828).